We begin with the raw amino-acid sequence, 500 residues long: Glycerol kinase (500 aa).

Thr15 serves as a coordination point for ADP. Thr15, Thr16, and Ser17 together coordinate ATP. Position 15 (Thr15) interacts with sn-glycerol 3-phosphate. Arg19 contributes to the ADP binding site. The sn-glycerol 3-phosphate site is built by Arg85, Glu86, Tyr137, and Asp245. Glycerol is bound by residues Arg85, Glu86, Tyr137, Asp245, and Gln246. Positions 267 and 310 each coordinate ADP. Thr267, Gly310, Gln314, and Gly411 together coordinate ATP. ADP is bound by residues Gly411 and Asn415.

It belongs to the FGGY kinase family.

It carries out the reaction glycerol + ATP = sn-glycerol 3-phosphate + ADP + H(+). Its pathway is polyol metabolism; glycerol degradation via glycerol kinase pathway; sn-glycerol 3-phosphate from glycerol: step 1/1. Its activity is regulated as follows. Inhibited by fructose 1,6-bisphosphate (FBP). Key enzyme in the regulation of glycerol uptake and metabolism. Catalyzes the phosphorylation of glycerol to yield sn-glycerol 3-phosphate. This is Glycerol kinase from Aeromonas salmonicida (strain A449).